Reading from the N-terminus, the 172-residue chain is Auxin-responsive protein IAA30 (172 aa).

A compositionally biased stretch (low complexity) spans 1 to 18; it reads MGRGRSSSSSSIESSCKS. Positions 1-28 are disordered; it reads MGRGRSSSSSSIESSCKSNPFGVSSSNT. Positions 35-39 match the EAR-like (transcriptional repression) motif; the sequence is LRLGL. The PB1 domain maps to 82–171; it reads SFYVKVNMEG…RRLKISRAYH (90 aa).

This sequence belongs to the Aux/IAA family. In terms of assembly, homodimers and heterodimers.

It localises to the nucleus. In terms of biological role, aux/IAA proteins are short-lived transcriptional factors that function as repressors of early auxin response genes at low auxin concentrations. Repression is thought to result from the interaction with auxin response factors (ARFs), proteins that bind to the auxin-responsive promoter element (AuxRE). Formation of heterodimers with ARF proteins may alter their ability to modulate early auxin response genes expression. This chain is Auxin-responsive protein IAA30 (IAA30), found in Arabidopsis thaliana (Mouse-ear cress).